The chain runs to 454 residues: UDP-glycosyltransferase 79A2 (454 aa).

Residues S269, 330–331 (WV), 348–356 (HAGYGSVIE), and 370–373 (KVDQ) each bind UDP-alpha-D-glucose.

This sequence belongs to the UDP-glycosyltransferase family.

May glycosylate diterpenes or flavonols in leaves. This Stevia rebaudiana (Stevia) protein is UDP-glycosyltransferase 79A2.